The primary structure comprises 360 residues: Putative transcription factor A494R (360 aa).

A zinc finger spans residues 153 to 175 (CTCGGQMELWVNSTQSDLVCNEC).

It belongs to the nucleo-cytoplasmic large DNA viruses (NCLDVs) VLTF-3 family.

In terms of biological role, putative transcription factor. This chain is Putative transcription factor A494R, found in Paramecium bursaria Chlorella virus 1 (PBCV-1).